Reading from the N-terminus, the 508-residue chain is 3-octaprenyl-4-hydroxybenzoate carboxy-lyase (508 aa).

Asparagine 178 provides a ligand contact to Mn(2+). Prenylated FMN contacts are provided by residues 181–183 (IYR), 195–197 (RWL), and 200–201 (RG). Glutamate 244 serves as a coordination point for Mn(2+). Aspartate 303 (proton donor) is an active-site residue.

Belongs to the UbiD family. As to quaternary structure, homohexamer. The cofactor is prenylated FMN. It depends on Mn(2+) as a cofactor.

The protein localises to the cell membrane. The enzyme catalyses a 4-hydroxy-3-(all-trans-polyprenyl)benzoate + H(+) = a 2-(all-trans-polyprenyl)phenol + CO2. It functions in the pathway cofactor biosynthesis; ubiquinone biosynthesis. In terms of biological role, catalyzes the decarboxylation of 3-octaprenyl-4-hydroxy benzoate to 2-octaprenylphenol, an intermediate step in ubiquinone biosynthesis. This chain is 3-octaprenyl-4-hydroxybenzoate carboxy-lyase, found in Cupriavidus taiwanensis (strain DSM 17343 / BCRC 17206 / CCUG 44338 / CIP 107171 / LMG 19424 / R1) (Ralstonia taiwanensis (strain LMG 19424)).